The sequence spans 98 residues: Small ribosomal subunit protein bS6c (98 aa).

Belongs to the bacterial ribosomal protein bS6 family.

It is found in the plastid. The protein resides in the chloroplast. Its function is as follows. Binds together with bS18 to 16S ribosomal RNA. The polypeptide is Small ribosomal subunit protein bS6c (Phaeodactylum tricornutum (strain CCAP 1055/1)).